A 384-amino-acid chain; its full sequence is Putative D-galactosamine-6-phosphate deaminase AgaS (384 aa).

SIS domains lie at Leu-45 to Phe-197 and Ser-215 to Pro-364.

It belongs to the SIS family. AgaS subfamily.

It catalyses the reaction D-galactosamine 6-phosphate + H2O = D-tagatopyranose 1-phosphate + NH4(+). Its function is as follows. Catalyzes the isomerization-deamination of galactosamine 6-phosphate to form tagatofuranose 6-phosphate and ammonium ion. The protein is Putative D-galactosamine-6-phosphate deaminase AgaS (agaS) of Escherichia coli (strain K12).